We begin with the raw amino-acid sequence, 1025 residues long: Multidrug resistance protein MdtC (1025 aa).

The next 12 helical transmembrane spans lie at 3–23 (FFAL…AITL), 333–353 (EVEQ…FLFL), 360–380 (IIPA…MYLC), 387–407 (LSLM…IVVL), 431–451 (VGFT…PLLL), 463–483 (FAVT…TLTP), 528–548 (LVGV…ISIP), 853–873 (VILI…LYES), 875–895 (VHPL…LLAL), 897–917 (LFNA…IGIV), 953–973 (PIMM…LSGG), and 984–1004 (ITIV…TPVV).

This sequence belongs to the resistance-nodulation-cell division (RND) (TC 2.A.6) family. MdtC subfamily. Part of a tripartite efflux system composed of MdtA, MdtB and MdtC. MdtC forms a heteromultimer with MdtB.

It is found in the cell inner membrane. In terms of biological role, the MdtABC tripartite complex confers resistance against novobiocin and deoxycholate. This chain is Multidrug resistance protein MdtC, found in Escherichia fergusonii (strain ATCC 35469 / DSM 13698 / CCUG 18766 / IAM 14443 / JCM 21226 / LMG 7866 / NBRC 102419 / NCTC 12128 / CDC 0568-73).